The chain runs to 2060 residues: Unconventional myosin-X (2060 aa).

Methionine 1 carries the post-translational modification N-acetylmethionine. In terms of domain architecture, Myosin motor spans 63 to 739; that stretch reads EGVDDMASLT…LEQKLEKRRE (677 aa). ATP is bound by residues asparagine 104, tyrosine 113, 160 to 165, and asparagine 215; that span reads GAGKTE. The segment at 619–641 is actin-binding; the sequence is LHSLMATLSSSNPFFVRCIKPNT. IQ domains lie at 742-771, 765-794, and 788-817; these read IDRA…GVVT, VLCG…AAIV, and LKKA…EKRE. The SAH stretch occupies residues 814–882; the sequence is EKRELEERKR…LTRELEKQRE (69 aa). A coiled-coil region spans residues 883-933; sequence NKQVEEILRLEKEIEDLQRMKEQQELSLTEASLQKLQQLRDEELRRLEDEA. 3 positions are modified to phosphoserine: serine 961, serine 964, and serine 967. Disordered regions lie at residues 971–1039 and 1064–1088; these read SELA…PYMN and SLHN…PSPD. Residues 991-1005 show a composition bias toward acidic residues; sequence PEEEVDEGFEADDDA. Polar residues predominate over residues 1064–1083; the sequence is SLHNSSSGESTYCMPQNNGD. Residue threonine 1160 is modified to Phosphothreonine. 2 consecutive PH domains span residues 1214-1312 and 1394-1499; these read EALK…QVHS and EFIV…NVTD. A MyTH4 domain is found at 1549-1697; the sequence is LPYGDINLNL…PSRDEIEALI (149 aa). One can recognise an FERM domain in the interval 1702-2046; that stretch reads MTSTVYCHGG…AYISMIVKKR (345 aa).

Belongs to the TRAFAC class myosin-kinesin ATPase superfamily. Myosin family. In terms of assembly, monomer, when in an inactive conformation in the cytosol. Homodimer in its active, membrane-bound conformation; antiparallel coiled coil-mediated dimer formation. Interacts with ECPAS. Interacts with DCC and ITGB5; the presence of DCC inhibits ITGB5 binding. Interacts with tubulin; ITGB5 or DCC binding inhibits tubulin binding. Interacts strongly with CALM3 and weakly with CALM, the CALM3 interaction is essential for function in filopodial extension and motility. Interacts with ITGB1, ITGB3 and ITGB5. Interacts with NEO1. Interacts with VASP.

Its subcellular location is the cytoplasm. The protein resides in the cytosol. The protein localises to the cell projection. It localises to the lamellipodium. It is found in the ruffle. Its subcellular location is the cytoskeleton. The protein resides in the filopodium tip. The protein localises to the cell cortex. It localises to the filopodium membrane. It is found in the cell membrane. In terms of biological role, myosins are actin-based motor molecules with ATPase activity. Unconventional myosins serve in intracellular movements. MYO10 binds to actin filaments and actin bundles and functions as a plus end-directed motor. Moves with higher velocity and takes larger steps on actin bundles than on single actin filaments. The tail domain binds to membranous compartments containing phosphatidylinositol 3,4,5-trisphosphate or integrins, and mediates cargo transport along actin filaments. Regulates cell shape, cell spreading and cell adhesion. Stimulates the formation and elongation of filopodia. In hippocampal neurons it induces the formation of dendritic filopodia by trafficking the actin-remodeling protein VASP to the tips of filopodia, where it promotes actin elongation. Plays a role in formation of the podosome belt in osteoclasts. This is Unconventional myosin-X (Myo10) from Rattus norvegicus (Rat).